The following is a 536-amino-acid chain: Chorismate synthase (536 aa).

His-17 is an active-site residue. The disordered stretch occupies residues Glu-37–Glu-59. His-104 is an active-site residue. Positions Glu-344–Arg-377 are disordered. Residues Ser-354 to Arg-377 show a composition bias toward basic and acidic residues. Asp-489 is an active-site residue.

The protein belongs to the chorismate synthase family. FMNH2 is required as a cofactor.

The enzyme catalyses 5-O-(1-carboxyvinyl)-3-phosphoshikimate = chorismate + phosphate. It catalyses the reaction FMNH2 + NADP(+) = FMN + NADPH + 2 H(+). Its pathway is metabolic intermediate biosynthesis; chorismate biosynthesis; chorismate from D-erythrose 4-phosphate and phosphoenolpyruvate: step 7/7. Its function is as follows. Bifunctional chorismate synthase and flavin reductase. Catalyzes the conversion of 5-enolpyruvylshikimate 3-phosphate (EPSP) to form chorismate. Acts also as a flavin reductase (FR) able to generate reduced flavin mononucleotide in the presence of NADPH. The polypeptide is Chorismate synthase (AROC) (Toxoplasma gondii).